An 825-amino-acid polypeptide reads, in one-letter code: E3 ubiquitin-protein ligase ICP0 (825 aa).

Residues 1-10 show a composition bias toward polar residues; it reads MEPRPGTSSR. Residues 1–121 form a disordered region; that stretch reads MEPRPGTSSR…VGEEEAEAGG (121 aa). Over residues 46–57 the composition is skewed to acidic residues; that stretch reads DSEEETEVGISD. An RING-type zinc finger spans residues 126–167; the sequence is CAVCTDEIAPPLRCQSFPCLHPFCIPCMKTWIPLRNTCPLCN. Disordered regions lie at residues 221–312, 325–683, and 803–825; these read RSLS…GGGP, PPAA…PAPG, and RHPW…GHGE. A compositionally biased stretch (acidic residues) spans 242 to 251; the sequence is TDDEDDDLAD. Composition is skewed to low complexity over residues 273–283, 290–303, and 350–367; these read TRGTSQPAATR, PRSS…LRAG, and PPAR…VISD. The span at 368–379 shows a compositional bias: pro residues; it reads SPPPSPRRPAGP. 2 stretches are compositionally biased toward low complexity: residues 380–394 and 402–439; these read GPLS…QVSS and PQSS…DAAG. The segment covering 456–468 has biased composition (polar residues); sequence RMTQAQTDTQAQS. The segment covering 479–491 has biased composition (gly residues); the sequence is GSGGPGAEGGPGV. Composition is skewed to low complexity over residues 492-510 and 519-540; these read PRGT…GAAA and DSGP…PLAP. The segment covering 552–563 has biased composition (basic and acidic residues); that stretch reads RAPDSDSGDRGH. Low complexity predominate over residues 567-641; the sequence is APASAGAAPP…GGSVASASGA (75 aa). The span at 658-667 shows a compositional bias: basic residues; the sequence is GPRKCARKTR. Low complexity predominate over residues 811 to 825; the sequence is GAPAPAGDAPAGHGE.

Post-translationally, auto-ubiquitinated.

It catalyses the reaction S-ubiquitinyl-[E2 ubiquitin-conjugating enzyme]-L-cysteine + [acceptor protein]-L-lysine = [E2 ubiquitin-conjugating enzyme]-L-cysteine + N(6)-ubiquitinyl-[acceptor protein]-L-lysine.. In terms of biological role, evades nuclear antiviral defenses triggered by dsDNA viruses. Acts during the initial stages of lytic infection and the reactivation of latent viral genome. Prevents the antiviral effect of nuclear bodies by degrading host PML and SP100. Prevents antiviral response to viral DNA induced by IFI16 by degrading it. Additionally, inhibits host IRF3 nuclear signaling to prevent interferon production by the infected cells. This is E3 ubiquitin-protein ligase ICP0 (RL2) from Homo sapiens (Human).